Reading from the N-terminus, the 162-residue chain is Phosphopantetheine adenylyltransferase (162 aa).

Ser11 lines the substrate pocket. Residues 11–12 and His19 each bind ATP; that span reads SF. Substrate is bound by residues Lys43, Val76, and Arg90. Residues 91 to 93, Glu101, and 126 to 132 contribute to the ATP site; these read GLR and HLYISSS.

It belongs to the bacterial CoaD family. Homohexamer. It depends on Mg(2+) as a cofactor.

It is found in the cytoplasm. The enzyme catalyses (R)-4'-phosphopantetheine + ATP + H(+) = 3'-dephospho-CoA + diphosphate. The protein operates within cofactor biosynthesis; coenzyme A biosynthesis; CoA from (R)-pantothenate: step 4/5. Reversibly transfers an adenylyl group from ATP to 4'-phosphopantetheine, yielding dephospho-CoA (dPCoA) and pyrophosphate. This chain is Phosphopantetheine adenylyltransferase, found in Streptococcus pneumoniae (strain 70585).